An 82-amino-acid chain; its full sequence is Defensin-like protein 208 (82 aa).

The first 29 residues, 1 to 29, serve as a signal peptide directing secretion; sequence MAKNLNTVSFTVLLLVLLMASTGILETEA. 3 cysteine pairs are disulfide-bonded: Cys-38-Cys-63, Cys-50-Cys-76, and Cys-54-Cys-78.

This sequence belongs to the DEFL family.

The protein resides in the secreted. The protein is Defensin-like protein 208 of Arabidopsis thaliana (Mouse-ear cress).